Consider the following 298-residue polypeptide: Pyruvate synthase subunit PorB (298 aa).

4 residues coordinate [4Fe-4S] cluster: Cys-19, Cys-22, Cys-47, and Cys-218.

In terms of assembly, heterotetramer of one alpha, one beta, one delta and one gamma chain. [4Fe-4S] cluster is required as a cofactor.

The enzyme catalyses 2 oxidized [2Fe-2S]-[ferredoxin] + pyruvate + CoA = 2 reduced [2Fe-2S]-[ferredoxin] + acetyl-CoA + CO2 + H(+). In Methanocaldococcus jannaschii (strain ATCC 43067 / DSM 2661 / JAL-1 / JCM 10045 / NBRC 100440) (Methanococcus jannaschii), this protein is Pyruvate synthase subunit PorB (porB).